The chain runs to 267 residues: Acyl-[acyl-carrier-protein]--UDP-N-acetylglucosamine O-acyltransferase (267 aa).

The protein belongs to the transferase hexapeptide repeat family. LpxA subfamily. As to quaternary structure, homotrimer.

It localises to the cytoplasm. The catalysed reaction is a (3R)-hydroxyacyl-[ACP] + UDP-N-acetyl-alpha-D-glucosamine = a UDP-3-O-[(3R)-3-hydroxyacyl]-N-acetyl-alpha-D-glucosamine + holo-[ACP]. The protein operates within glycolipid biosynthesis; lipid IV(A) biosynthesis; lipid IV(A) from (3R)-3-hydroxytetradecanoyl-[acyl-carrier-protein] and UDP-N-acetyl-alpha-D-glucosamine: step 1/6. In terms of biological role, involved in the biosynthesis of lipid A, a phosphorylated glycolipid that anchors the lipopolysaccharide to the outer membrane of the cell. This Cupriavidus pinatubonensis (strain JMP 134 / LMG 1197) (Cupriavidus necator (strain JMP 134)) protein is Acyl-[acyl-carrier-protein]--UDP-N-acetylglucosamine O-acyltransferase.